Here is a 480-residue protein sequence, read N- to C-terminus: Glycogen synthase (480 aa).

ADP-alpha-D-glucose is bound at residue lysine 15.

This sequence belongs to the glycosyltransferase 1 family. Bacterial/plant glycogen synthase subfamily.

It catalyses the reaction [(1-&gt;4)-alpha-D-glucosyl](n) + ADP-alpha-D-glucose = [(1-&gt;4)-alpha-D-glucosyl](n+1) + ADP + H(+). The protein operates within glycan biosynthesis; glycogen biosynthesis. In terms of biological role, synthesizes alpha-1,4-glucan chains using ADP-glucose. The sequence is that of Glycogen synthase from Opitutus terrae (strain DSM 11246 / JCM 15787 / PB90-1).